The following is a 334-amino-acid chain: Ornithine carbamoyltransferase (334 aa).

Residues 57 to 60 (STRT), Gln-84, Arg-108, and 135 to 138 (HPTQ) each bind carbamoyl phosphate. L-ornithine is bound by residues Asn-169, Asp-233, and 237-238 (SM). Carbamoyl phosphate contacts are provided by residues 275-276 (CL) and Arg-320.

The protein belongs to the aspartate/ornithine carbamoyltransferase superfamily. OTCase family.

It localises to the cytoplasm. The enzyme catalyses carbamoyl phosphate + L-ornithine = L-citrulline + phosphate + H(+). It participates in amino-acid biosynthesis; L-arginine biosynthesis; L-arginine from L-ornithine and carbamoyl phosphate: step 1/3. Reversibly catalyzes the transfer of the carbamoyl group from carbamoyl phosphate (CP) to the N(epsilon) atom of ornithine (ORN) to produce L-citrulline. The polypeptide is Ornithine carbamoyltransferase (argF) (Pasteurella multocida (strain Pm70)).